The primary structure comprises 576 residues: G protein-coupled receptor kinase 6 (576 aa).

The segment at 1–185 is N-terminal; that stretch reads MELENIVANT…LERQPVTKNT (185 aa). One can recognise an RGS domain in the interval 53–171; the sequence is YHSLCERQPI…LDSIYFNRFL (119 aa). The Protein kinase domain occupies 186-448; that stretch reads FRQYRVLGKG…AREVKEHPLF (263 aa). ATP-binding positions include 192–200, Lys-215, and 264–270; these read LGKGGFGEV and TLMNGGD. The active-site Proton acceptor is Asp-311. 315–318 contacts ATP; it reads ENIL. An AGC-kinase C-terminal domain is found at 449–514; the sequence is KKLNFKRLGA…GSVSIPWQNE (66 aa). Position 484 is a phosphoserine; by autocatalysis (Ser-484). Thr-485 carries the phosphothreonine; by autocatalysis modification. S-palmitoyl cysteine attachment occurs at residues Cys-561, Cys-562, and Cys-565. Phosphoserine is present on residues Ser-566 and Ser-568.

This sequence belongs to the protein kinase superfamily. AGC Ser/Thr protein kinase family. GPRK subfamily. As to quaternary structure, interacts with GIT1. As to expression, widely expressed. Detectable in all brain areas examined.

The protein resides in the membrane. It catalyses the reaction [G-protein-coupled receptor] + ATP = [G-protein-coupled receptor]-phosphate + ADP + H(+). Functionally, specifically phosphorylates the activated forms of G protein-coupled receptors. Such receptor phosphorylation initiates beta-arrestin-mediated receptor desensitization, internalization, and signaling events leading to their desensitization. Seems to be involved in the desensitization of D2-like dopamine receptors in striatum and chemokine receptor CXCR4 which is critical for CXCL12-induced cell chemotaxis. Phosphorylates rhodopsin (RHO) (in vitro) and a non G-protein-coupled receptor: LRP6 during Wnt signaling (in vitro). In Rattus norvegicus (Rat), this protein is G protein-coupled receptor kinase 6 (Grk6).